A 218-amino-acid polypeptide reads, in one-letter code: Large ribosomal subunit protein bL25 (218 aa).

Residues Ser-187–Lys-218 form a disordered region. Low complexity predominate over residues Glu-202–Lys-218.

It belongs to the bacterial ribosomal protein bL25 family. CTC subfamily. In terms of assembly, part of the 50S ribosomal subunit; part of the 5S rRNA/L5/L18/L25 subcomplex. Contacts the 5S rRNA. Binds to the 5S rRNA independently of L5 and L18.

Its function is as follows. This is one of the proteins that binds to the 5S RNA in the ribosome where it forms part of the central protuberance. This chain is Large ribosomal subunit protein bL25, found in Anaplasma marginale (strain St. Maries).